The following is a 344-amino-acid chain: Treponemal membrane protein A (344 aa).

Residues 1–21 (MKLKSLVFSLSALFLVLGFTG) form the signal peptide. C22 carries the N-palmitoyl cysteine lipid modification. C22 carries the S-diacylglycerol cysteine lipid modification. Positions 257 to 344 (AAKTKQELSA…TEEPIEGGVQ (88 aa)) are disordered. Basic and acidic residues predominate over residues 260–277 (TKQELSAKLANEADKESP). 2 stretches are compositionally biased toward acidic residues: residues 312–322 (VPVEEMNENSS) and 335–344 (TEEPIEGGVQ).

It to T.pallidum TmpA.

Its subcellular location is the cell membrane. This chain is Treponemal membrane protein A (tmpA), found in Treponema phagedenis.